Consider the following 91-residue polypeptide: Class I hydrophobin 3 (91 aa).

An N-terminal signal peptide occupies residues 1–17 (MLFRLFTIPSIALGVLG). Intrachain disulfides connect Cys31-Cys70, Cys35-Cys61, Cys36-Cys53, and Cys71-Cys87.

Belongs to the fungal hydrophobin family. Self-assembles to form functional amyloid fibrils called rodlets. Self-assembly into fibrillar rodlets occurs spontaneously at hydrophobic:hydrophilic interfaces and the rodlets further associate laterally to form amphipathic monolayers. Expressed in conidia.

The protein resides in the secreted. It localises to the cell wall. Aerial growth, conidiation, and dispersal of filamentous fungi in the environment rely upon a capability of their secreting small amphipathic proteins called hydrophobins (HPBs) with low sequence identity. Class I can self-assemble into an outermost layer of rodlet bundles on aerial cell surfaces, conferring cellular hydrophobicity that supports fungal growth, development and dispersal; whereas Class II form highly ordered films at water-air interfaces through intermolecular interactions but contribute nothing to the rodlet structure. HYD3 is a class I hydrophobin located on the conidial surface that activates specifically the humoral and cellular immunity of Metarhizium acridum's own host insect, Locusta migratoria manilensis (Meyen) but not that of other non-host insects. Improves the resistance of locusts to both specialist and generalist fungal pathogens (wide host range) when topically applied to the cuticle, but has no effect on the fungal resistance of other insects, including Spodoptera frugiperda and Galleria mellonella. In Metarhizium acridum (strain CQMa 102), this protein is Class I hydrophobin 3.